The primary structure comprises 204 residues: Leucyl/phenylalanyl-tRNA--protein transferase (204 aa).

This sequence belongs to the L/F-transferase family.

It is found in the cytoplasm. It carries out the reaction N-terminal L-lysyl-[protein] + L-leucyl-tRNA(Leu) = N-terminal L-leucyl-L-lysyl-[protein] + tRNA(Leu) + H(+). The enzyme catalyses N-terminal L-arginyl-[protein] + L-leucyl-tRNA(Leu) = N-terminal L-leucyl-L-arginyl-[protein] + tRNA(Leu) + H(+). It catalyses the reaction L-phenylalanyl-tRNA(Phe) + an N-terminal L-alpha-aminoacyl-[protein] = an N-terminal L-phenylalanyl-L-alpha-aminoacyl-[protein] + tRNA(Phe). In terms of biological role, functions in the N-end rule pathway of protein degradation where it conjugates Leu, Phe and, less efficiently, Met from aminoacyl-tRNAs to the N-termini of proteins containing an N-terminal arginine or lysine. The sequence is that of Leucyl/phenylalanyl-tRNA--protein transferase from Agrobacterium fabrum (strain C58 / ATCC 33970) (Agrobacterium tumefaciens (strain C58)).